The sequence spans 256 residues: Eukaryotic translation initiation factor 3 subunit J (256 aa).

The interval 1-67 (MAAAAAGDSD…KEEAEVKPEV (67 aa)) is sufficient for interaction with EIF3B. The segment at 1–106 (MAAAAAGDSD…LEEPEEPKVL (106 aa)) is disordered. Ser9, Ser11, and Ser18 each carry phosphoserine. The segment covering 38-57 (EGEDEDEDVKDNWDDDDDEK) has biased composition (acidic residues). A compositionally biased stretch (basic and acidic residues) spans 58-104 (KEEAEVKPEVKISEKKKIAEKIKEKERQQKKRQEEIKKRLEEPEEPK). The stretch at 68-133 (KISEKKKIAE…ESDLELAKET (66 aa)) forms a coiled coil. Lys104 participates in a covalent cross-link: Glycyl lysine isopeptide (Lys-Gly) (interchain with G-Cter in SUMO2). Thr107 is modified (phosphothreonine). The residue at position 125 (Ser125) is a Phosphoserine. A disordered region spans residues 214–243 (QSKAKKKKKGVVPGGGLKATMKDDLADYGG). The tract at residues 241–256 (YGGYDGGYAQDYEDFM) is promotes stable association with the 40S ribosome. Tyr252 is subject to Phosphotyrosine.

It belongs to the eIF-3 subunit J family. As to quaternary structure, component of the eukaryotic translation initiation factor 3 (eIF-3) complex, which is composed of 13 subunits: EIF3A, EIF3B, EIF3C, EIF3D, EIF3E, EIF3F, EIF3G, EIF3H, EIF3I, EIF3J, EIF3K, EIF3L and EIF3M. The eIF-3 complex appears to include 3 stable modules: module A is composed of EIF3A, EIF3B, EIF3G and EIF3I; module B is composed of EIF3F, EIF3H, and EIF3M; and module C is composed of EIF3C, EIF3D, EIF3E, EIF3K and EIF3L. EIF3C of module C binds EIF3B of module A and EIF3H of module B, thereby linking the three modules. EIF3J is a labile subunit that binds to the eIF-3 complex via EIF3B. The eIF-3 complex interacts with RPS6KB1 under conditions of nutrient depletion. Mitogenic stimulation leads to binding and activation of a complex composed of MTOR and RPTOR, leading to phosphorylation and release of RPS6KB1 and binding of EIF4B to eIF-3. Phosphorylated. Phosphorylation is enhanced upon serum stimulation.

It localises to the cytoplasm. In terms of biological role, component of the eukaryotic translation initiation factor 3 (eIF-3) complex, which is required for several steps in the initiation of protein synthesis. The eIF-3 complex associates with the 40S ribosome and facilitates the recruitment of eIF-1, eIF-1A, eIF-2:GTP:methionyl-tRNAi and eIF-5 to form the 43S pre-initiation complex (43S PIC). The eIF-3 complex stimulates mRNA recruitment to the 43S PIC and scanning of the mRNA for AUG recognition. The eIF-3 complex is also required for disassembly and recycling of post-termination ribosomal complexes and subsequently prevents premature joining of the 40S and 60S ribosomal subunits prior to initiation. The eIF-3 complex specifically targets and initiates translation of a subset of mRNAs involved in cell proliferation, including cell cycling, differentiation and apoptosis, and uses different modes of RNA stem-loop binding to exert either translational activation or repression. This subunit binds directly within the mRNA entry channel of the 40S ribosome to the aminoacyl (A) site. It may regulate the interaction between the 43S PIC and mRNA. This chain is Eukaryotic translation initiation factor 3 subunit J, found in Bos taurus (Bovine).